A 277-amino-acid polypeptide reads, in one-letter code: Tumor necrosis factor receptor superfamily member 4 (277 aa).

Residues 1–28 (MCVGARRLGRGPCAALLLLGLGLSTVTG) form the signal peptide. Residues 29–214 (LHCVGDTYPS…RPVEVPGGRA (186 aa)) are Extracellular-facing. TNFR-Cys repeat units follow at residues 30-65 (HCVG…TVCR) and 66-107 (PCGP…DTVC). Cystine bridges form between Cys31/Cys42, Cys43/Cys56, Cys46/Cys64, Cys67/Cys81, Cys84/Cys99, Cys87/Cys107, Cys109/Cys125, and Cys128/Cys141. One copy of the TNFR-Cys 3; truncated repeat lies at 108–126 (RCRAGTQPLDSYKPGVDCA). The stretch at 127–167 (PCPPGHFSPGDNQACKPWTNCTLAGKHTLQPASNSSDAICE) is one TNFR-Cys 4 repeat. 2 N-linked (GlcNAc...) asparagine glycosylation sites follow: Asn146 and Asn160. Cysteines 147 and 166 form a disulfide. The tract at residues 158-209 (ASNSSDAICEDRDPPATQPQETQGPPARPITVQPTEAWPRTSQGPSTRPVEV) is disordered. A helical transmembrane segment spans residues 215 to 235 (VAAILGLGLVLGLLGPLAILL). Residues 236–277 (ALYLLRRDQRLPPDAHKPPGGGSFRTPIQEEQADAHSTLAKI) lie on the Cytoplasmic side of the membrane. The tract at residues 248–277 (PDAHKPPGGGSFRTPIQEEQADAHSTLAKI) is disordered.

As to quaternary structure, interacts with TRAF2, TRAF3 and TRAF5. In terms of assembly, (Microbial infection) Interacts with Human herpesvirus 6B/HHV-6B gQ1:gQ2 proteins.

Its subcellular location is the membrane. Receptor for TNFSF4/OX40L/GP34. Is a costimulatory molecule implicated in long-term T-cell immunity. Its function is as follows. (Microbial infection) Acts as a receptor for human herpesvirus 6B/HHV-6B. The sequence is that of Tumor necrosis factor receptor superfamily member 4 (TNFRSF4) from Homo sapiens (Human).